The sequence spans 90 residues: Transcriptional repressor SdpR (90 aa).

Residues 1-87 (MNNVFKAISD…WMLNFINKGD (87 aa)) form the HTH arsR-type domain. Positions 39–62 (PSISHHLNILKQAEVISDHRKGQF) form a DNA-binding region, H-T-H motif.

The protein resides in the cytoplasm. Its function is as follows. Represses the transcription of the sdpIR operon and of several other operons that probably contribute to delaying commitment to sporulation. This chain is Transcriptional repressor SdpR (sdpR), found in Bacillus subtilis (strain 168).